We begin with the raw amino-acid sequence, 437 residues long: Type II methyltransferase M.HgiBI (437 aa).

The region spanning 4–431 is the SAM-dependent MTase C5-type domain; that stretch reads FRFIDLFAGI…KALQCVKLFE (428 aa). C75 is an active-site residue.

This sequence belongs to the class I-like SAM-binding methyltransferase superfamily. C5-methyltransferase family.

The enzyme catalyses a 2'-deoxycytidine in DNA + S-adenosyl-L-methionine = a 5-methyl-2'-deoxycytidine in DNA + S-adenosyl-L-homocysteine + H(+). In terms of biological role, a methylase that recognizes the double-stranded sequence 5'-GGWCC-3', methylates C-? on both strands, and protects the DNA from cleavage by the HgiBI endonuclease. This system is less active than isoschizomeric RM.HgiEI. This Herpetosiphon aurantiacus (Herpetosiphon giganteus) protein is Type II methyltransferase M.HgiBI.